The sequence spans 343 residues: N6-succino-2-amino-2'-deoxyadenylate synthase (343 aa).

The Proton acceptor role is filled by Ser14. Residues Ser14, Thr15, Gly16, Lys17, and Gly18 each coordinate ATP. Ser14 is a binding site for dGMP. Ser14 lines the Mg(2+) pocket. Asn40 serves as a coordination point for dGMP. Residues Gly42, His43, and Thr44 each coordinate ATP. Gly42 provides a ligand contact to Mg(2+). The dGMP site is built by Ser127, Thr128, and Arg142. ATP is bound at residue Gln187. Thr202 serves as a coordination point for dGMP. Thr263 is a binding site for Mg(2+). Residues Thr263, Val264, and Arg269 each coordinate L-aspartate. Residues Asn294, Asn297, and Gly330 each contribute to the ATP site.

The protein belongs to the Caudovirales PurZ family. It depends on Mg(2+) as a cofactor.

The catalysed reaction is dGMP + L-aspartate + ATP = (2S)-2-amino-2'-deoxyadenylo-succinate + ADP + phosphate + 2 H(+). The protein operates within purine metabolism. Functionally, involved in the synthesis of the atypical nucleotide dZTP (2-amino-2'-deoxyadenosine-5'-triphosphate). Catalyzes the condensation of aspartate with deoxyguanylate into dSMP (N6-succino-2-amino-2'-deoxyadenylate), which undergoes defumarylation and phosphorylation respectively by host PurB and guanylate/nucleoside diphosphate kinases to give dZTP. dZTP is integrated into the viral genome instead of adenine by the viral DNA polymerase. This Z-base probably completely replaces adenosine and forms a triple bond to the opposite T-base. The resulting non-standard viral DNA is called Z-genome. The chemically modified DNA is probably harder for the host bacteria to digest with nucleases or restriction enzymes. This is N6-succino-2-amino-2'-deoxyadenylate synthase from Vibrio phage phiVC8.